We begin with the raw amino-acid sequence, 662 residues long: DNA ligase (662 aa).

NAD(+) is bound by residues 31–35 (DKDYD) and 79–80 (SL). The active-site N6-AMP-lysine intermediate is lysine 121. Residues arginine 143, glutamate 177, and lysine 313 each contribute to the NAD(+) site. Cysteine 406, cysteine 409, cysteine 422, and cysteine 428 together coordinate Zn(2+). The 77-residue stretch at 586 to 662 (VLESPFMGKT…LSEEEFENMI (77 aa)) folds into the BRCT domain.

This sequence belongs to the NAD-dependent DNA ligase family. LigA subfamily. Requires Mg(2+) as cofactor. It depends on Mn(2+) as a cofactor.

It carries out the reaction NAD(+) + (deoxyribonucleotide)n-3'-hydroxyl + 5'-phospho-(deoxyribonucleotide)m = (deoxyribonucleotide)n+m + AMP + beta-nicotinamide D-nucleotide.. Functionally, DNA ligase that catalyzes the formation of phosphodiester linkages between 5'-phosphoryl and 3'-hydroxyl groups in double-stranded DNA using NAD as a coenzyme and as the energy source for the reaction. It is essential for DNA replication and repair of damaged DNA. The protein is DNA ligase of Clostridium perfringens (strain 13 / Type A).